We begin with the raw amino-acid sequence, 328 residues long: Eukaryotic translation initiation factor 3 subunit I (328 aa).

5 WD repeats span residues 8 to 49 (GHER…GTYR), 50 to 89 (GHNGAVWCCDVSRDSSRLITGSADQTAKLWDVKSGKELFT), 146 to 185 (DGKKRINRAVWGPLNQTIVSGGEDKVIRIWDAETGKLLKQ), 191 to 230 (GHKKDITSLCKAADDSHFLTGSLDKTAKLWDMRTLTLLKT), and 288 to 327 (GHFGPINALAFNPDGKSFSSGGEDGYVRLHHFDSDYFNIK).

This sequence belongs to the eIF-3 subunit I family. Component of the eukaryotic translation initiation factor 3 (eIF-3) complex.

The protein localises to the cytoplasm. Functionally, component of the eukaryotic translation initiation factor 3 (eIF-3) complex, which is involved in protein synthesis of a specialized repertoire of mRNAs and, together with other initiation factors, stimulates binding of mRNA and methionyl-tRNAi to the 40S ribosome. The eIF-3 complex specifically targets and initiates translation of a subset of mRNAs involved in cell proliferation. This Arabidopsis thaliana (Mouse-ear cress) protein is Eukaryotic translation initiation factor 3 subunit I (TIF3I1).